Reading from the N-terminus, the 147-residue chain is Acidic phospholipase A2 S7-48J (147 aa).

An N-terminal signal peptide occupies residues 1–19; that stretch reads MYPAHLLVLLAVCVSLLGA. A propeptide spanning residues 20-27 is cleaved from the precursor; it reads SDIPPQPL. 7 disulfides stabilise this stretch: cysteine 38–cysteine 99, cysteine 54–cysteine 146, cysteine 56–cysteine 72, cysteine 71–cysteine 127, cysteine 78–cysteine 120, cysteine 88–cysteine 113, and cysteine 106–cysteine 118. Ca(2+) is bound by residues tyrosine 55, glycine 57, and glycine 59. Residue histidine 75 is part of the active site. Aspartate 76 serves as a coordination point for Ca(2+). Aspartate 121 is a catalytic residue.

The protein belongs to the phospholipase A2 family. Group I subfamily. D49 sub-subfamily. Requires Ca(2+) as cofactor. As to expression, expressed by the venom gland.

Its subcellular location is the secreted. It carries out the reaction a 1,2-diacyl-sn-glycero-3-phosphocholine + H2O = a 1-acyl-sn-glycero-3-phosphocholine + a fatty acid + H(+). Its function is as follows. Snake venom phospholipase A2 (PLA2) that inhibits collagen-induced platelet aggregation. PLA2 catalyzes the calcium-dependent hydrolysis of the 2-acyl groups in 3-sn-phosphoglycerides. The polypeptide is Acidic phospholipase A2 S7-48J (Austrelaps superbus (Lowland copperhead snake)).